A 363-amino-acid polypeptide reads, in one-letter code: Ribosomal RNA large subunit methyltransferase M (363 aa).

S-adenosyl-L-methionine contacts are provided by residues Ser194, 227 to 230 (CPGG), Asp246, Asp266, and Asp284. The Proton acceptor role is filled by Lys313.

The protein belongs to the class I-like SAM-binding methyltransferase superfamily. RNA methyltransferase RlmE family. RlmM subfamily. In terms of assembly, monomer.

Its subcellular location is the cytoplasm. It catalyses the reaction cytidine(2498) in 23S rRNA + S-adenosyl-L-methionine = 2'-O-methylcytidine(2498) in 23S rRNA + S-adenosyl-L-homocysteine + H(+). Functionally, catalyzes the 2'-O-methylation at nucleotide C2498 in 23S rRNA. The sequence is that of Ribosomal RNA large subunit methyltransferase M from Haemophilus influenzae (strain ATCC 51907 / DSM 11121 / KW20 / Rd).